We begin with the raw amino-acid sequence, 3790 residues long: Transcription-associated protein 1 (3790 aa).

HEAT repeat units lie at residues 98 to 136 (RQHVKTIITMMLKILKTDNEENVLVCLRIIIELHKHFRP), 335 to 381 (TDLR…HVRQ), 740 to 778 (DLLYQEFLPLLPNLLEGLNRLQSGFHKQHMRDLFVELCL), 1185 to 1223 (AKATYEVIHELVRHITSPNTIVREESMVLLKHIGTIQSK), 1332 to 1370 (IGYKEKIINIIFKVMESDKSELQTTAFHCMKHFITGVTL), and 1826 to 1864 (AIHKKIVLQVFHSLLKGHALEARSIVKQALDVLTPAMPL). In terms of domain architecture, FAT spans 2610-3173 (LLAYLGKSHN…YFPIRTLYLT (564 aa)). Residues 3429 to 3753 (MPRVEIVQKN…AVDIIMTRFN (325 aa)) enclose the PI3K/PI4K catalytic domain. Residues 3435–3441 (VQKNNTA) form a G-loop region. The catalytic loop stretch occupies residues 3616-3624 (NLTRLNADM). The tract at residues 3636–3661 (ISYFKFDVNDDKCQLNQHRPVPFRLT) is activation loop. Residues 3758-3790 (FDSIENKKISVLVQSATNIDNLCRMDPAWHPWL) form the FATC domain.

The protein belongs to the PI3/PI4-kinase family. TRA1 subfamily. Component of the Tip60 chromatin-remodeling complex which contains the catalytic subunit Tip60 and the subunits Domino, Tra1, Brd8, E(Pc), DMAP1, Pontin, Reptin, Ing3, Act87E, BAP55, Mrg15, MrgBP, Gas41 and YL-1. Probable component of some SAGA complex. Interacts with Spt3, Gcn5, Ada3 and Ada2b. Ubiquitous.

The protein localises to the nucleus. It localises to the cytoplasm. It is found in the chromosome. Functionally, part of the Tip60 chromatin-remodeling complex which is involved in DNA repair. Upon induction of DNA double-strand breaks, this complex acetylates phosphorylated H2AV in nucleosomes and exchanges it with unmodified H2AV. During wing development, required for activity of Notch and its coactivator mam. Function in promoting mam function is likely to involve both the Tip60 and SAGA complexes. This is Transcription-associated protein 1 (Nipped-A) from Drosophila melanogaster (Fruit fly).